Reading from the N-terminus, the 555-residue chain is Potassium-transporting ATPase potassium-binding subunit (555 aa).

Helical transmembrane passes span 2–22, 60–80, 130–150, 173–193, 246–266, 278–298, 374–394, 412–432, 483–503, and 525–545; these read IWVA…PTGI, QYAL…YFIF, IGIT…VMAF, VFLP…VPQT, MSNI…PFTY, ILFV…TTSE, AGFV…GLMV, LIAV…ALAL, LVMF…AASL, and GIFI…MLVL.

This sequence belongs to the KdpA family. As to quaternary structure, the system is composed of three essential subunits: KdpA, KdpB and KdpC.

The protein localises to the cell membrane. Part of the high-affinity ATP-driven potassium transport (or Kdp) system, which catalyzes the hydrolysis of ATP coupled with the electrogenic transport of potassium into the cytoplasm. This subunit binds the extracellular potassium ions and delivers the ions to the membrane domain of KdpB through an intramembrane tunnel. This Bacillus mycoides (strain KBAB4) (Bacillus weihenstephanensis) protein is Potassium-transporting ATPase potassium-binding subunit.